The sequence spans 192 residues: MRVPGIPDEEFIREEKIPMTKEEIRVLALSKARLFYGAKFLDVGSGTGSVSVEAGLIVGEKGKVYAVERDPQAVELTRKNVEKFSLRNVEIIEGEAPEVLNKINDELDSAFIGGTERLEEIIPVVSEKIRRGGMIVLDAILIESAVKALHTLSELGYKAEVIEVIVAKGMKTSKGYAMISRNPIFIIYGEKK.

S-adenosyl-L-methionine-binding positions include Thr20, 44–48 (GSGTG), Glu68, and Ala96.

This sequence belongs to the methyltransferase superfamily. Archaeal-type CbiT family.

The catalysed reaction is Co-precorrin-6B + S-adenosyl-L-methionine = Co-precorrin-7 + S-adenosyl-L-homocysteine + CO2. It participates in cofactor biosynthesis; adenosylcobalamin biosynthesis; cob(II)yrinate a,c-diamide from sirohydrochlorin (anaerobic route): step 8/10. Catalyzes the methylation of C-15 in cobalt-precorrin-6B followed by the decarboxylation of C-12 to form cobalt-precorrin-7. The protein is Probable cobalt-precorrin-6B C(15)-methyltransferase (decarboxylating) of Sulfolobus acidocaldarius (strain ATCC 33909 / DSM 639 / JCM 8929 / NBRC 15157 / NCIMB 11770).